Here is a 347-residue protein sequence, read N- to C-terminus: UDP-3-O-acylglucosamine N-acyltransferase (347 aa).

Residue His240 is the Proton acceptor of the active site.

The protein belongs to the transferase hexapeptide repeat family. LpxD subfamily. Homotrimer.

The enzyme catalyses a UDP-3-O-[(3R)-3-hydroxyacyl]-alpha-D-glucosamine + a (3R)-hydroxyacyl-[ACP] = a UDP-2-N,3-O-bis[(3R)-3-hydroxyacyl]-alpha-D-glucosamine + holo-[ACP] + H(+). It functions in the pathway bacterial outer membrane biogenesis; LPS lipid A biosynthesis. Catalyzes the N-acylation of UDP-3-O-acylglucosamine using 3-hydroxyacyl-ACP as the acyl donor. Is involved in the biosynthesis of lipid A, a phosphorylated glycolipid that anchors the lipopolysaccharide to the outer membrane of the cell. In Hydrogenovibrio crunogenus (strain DSM 25203 / XCL-2) (Thiomicrospira crunogena), this protein is UDP-3-O-acylglucosamine N-acyltransferase.